A 554-amino-acid polypeptide reads, in one-letter code: MAAKIIKFDQEGRNAILKGVNILADTVKVTLGPKGRNVVIDKSFGAPLITKDGVTVAKEIELEDKFENMGAQLVKEVASKTSDVAGDGTTTATVLAQAIYRQGSKLVAAGHNPMEIKRGIDKAVETIVAELQKISKPIVDHKEIAQVGTISANNDKTIGDIIAEAMEKVGKEGVITVEEAKSMDTTLETVEGMQFDRGYLSPYFVTDPERMEAALENALILIHDKKISNMKDLLPILEQTAKSGRPLLIIAEDIEGEALATLVVNKLRGVLNVAAVKAPGFGDRRKAMLEDIATLTGGLVISEEVGHKLEQATMDMLGRAKRITIDKDNTTIIDGEGKEADIQGRVKQIRAQIEETTSDYDKEKLQERLAKLVGGVAVIKVGAATEVEMKEKKARVEDALHATRAAVDEGVVPGGGVAYIRTLSALDNLNLENEQQFGVTVVKLALEAPIRQIADNAGIDASIVVDKVRNGKDAFGYDAASDEYVDMLKAGIIDPTKVSRSALQNASSIAGLMLTTEALIAEKPREEGAMGGGMPGGMGGMGGMGGMGGMGGMM.

Residues 30–33 (TLGP), Lys-51, 87–91 (DGTTT), Gly-415, 478–480 (DAA), and Asp-494 contribute to the ATP site.

This sequence belongs to the chaperonin (HSP60) family. Forms a cylinder of 14 subunits composed of two heptameric rings stacked back-to-back. Interacts with the co-chaperonin GroES.

The protein localises to the cytoplasm. It carries out the reaction ATP + H2O + a folded polypeptide = ADP + phosphate + an unfolded polypeptide.. In terms of biological role, together with its co-chaperonin GroES, plays an essential role in assisting protein folding. The GroEL-GroES system forms a nano-cage that allows encapsulation of the non-native substrate proteins and provides a physical environment optimized to promote and accelerate protein folding. The polypeptide is Chaperonin GroEL (Pelobacter propionicus (strain DSM 2379 / NBRC 103807 / OttBd1)).